The following is a 908-amino-acid chain: AdoMet-dependent rRNA methyltransferase SPB1 (908 aa).

S-adenosyl-L-methionine contacts are provided by Gly-57, Trp-59, Asp-77, Asp-93, and Asp-118. Lys-158 functions as the Proton acceptor in the catalytic mechanism. The stretch at 378–422 forms a coiled coil; it reads MDEEEQITEELQKLQQAKLAKTKRERKRANEKKARELLKLQLNMT. Disordered stretches follow at residues 440 to 513, 535 to 715, and 806 to 841; these read IFDL…YDSY, NFDA…DEVK, and AKGRKKMKAVARMEKAKKKADGVMESEEMGDGEKAR. Residues 464–493 show a composition bias toward acidic residues; that stretch reads DDGEGMDLASESEEEEDEDEEDDEVLDSDE. Residues 535–545 show a composition bias toward basic and acidic residues; it reads NFDAWHGIQEK. Acidic residues-rich tracts occupy residues 546–564 and 579–591; these read SDEEGSDDDDGQDDDEEGG and DSSDSDSDAEPET. Residues 592–610 are compositionally biased toward basic and acidic residues; sequence EVPKKIKKVSFEKPARSEK. Composition is skewed to acidic residues over residues 650–678 and 685–712; these read DGDDEEEEEEDESEEEESDDEDVDMEDAS and EGDDDFEIVPQAPEDDGPEWDVDDEDQD. Basic and acidic residues predominate over residues 816–827; sequence ARMEKAKKKADG.

The protein belongs to the class I-like SAM-binding methyltransferase superfamily. RNA methyltransferase RlmE family. SPB1 subfamily. Component of the nucleolar and nucleoplasmic pre-60S ribosomal particle.

It localises to the nucleus. The protein localises to the nucleolus. The enzyme catalyses a ribonucleotide in rRNA + S-adenosyl-L-methionine = a 2'-O-methylribonucleotide in rRNA + S-adenosyl-L-homocysteine + H(+). Its function is as follows. Required for proper assembly of pre-ribosomal particles during the biogenesis of the 60S ribosomal subunit. This chain is AdoMet-dependent rRNA methyltransferase SPB1, found in Cryptococcus neoformans var. neoformans serotype D (strain B-3501A) (Filobasidiella neoformans).